A 1123-amino-acid chain; its full sequence is MEAIARLDSNALAKIGSGGTPFDSGLHSGVKWFIDNALRLREQFTGPNVRMETYGLSGPGLNMRDFGQKVIVPLLKISIGRYLNRAQAGNLAAFFRLISSTFKPASLPQAQTEFHMLFDITEQRVAQTGNLQTVGGGSTTTTYDIVMSLERKIVTTEIDSLELFYTNDPLVIAESITRELESMQTALDLSVILEHAKFCARQPLLGEMCGLREAARQNDLTDGAIIRACQLENIVCGSLNRSPKNLVSLLHTALKILDISPKDAAVVTTNTVFQNSSLDRRLVESQVGGSDEVYIYSVNGAVGMQPIAKFGKTVPPGEGLRAFNAPVPEVSPGVARSAYGGLKSVDDVMAIHLGNNETIPVIPLDSTKFSVYGNTSVETAMTQECIKRLFFTVGTCPNIYDSLEPGSFFGPSSGTGEEITPAMVAMRSPRSTYIMDLDRGDRVQEITLRQLHRVFLDGNKDAFDTSGFARKIARLTEALEKFNEAEVANLFLEPEWERKMADPGSIFEFDPRQMLIEIPDAEADDVLVVGVDTMNDRAYAAVPRTCMYNSSSLSMKHNEMIGVLSSMLQLVGQSSAITNYCQLVQTALSDTSAEGVEAVNNIRHMDLTGATPPLTRVMVDKITLRGGRYLPLSDPYCQLAIIKYFDDPAAITDVGNRVDVVQTVVNTIRAGFDAIVNVFKTIFDEPDFSIFSVNNMPKSICVTQALTATENLFMNIAYAAILPIFTDTLASMGGGMTVDTETNFNGMVFPVYRNACFIGSGATLPNQVKLWELTGVTKPLLVRAVWKCRTREIMKTFGGQNPFMGFLYHLHLSTLIDKTVILKHFDVKYYSGFSYLCVRTTRFTGHGLSVLPRKSARFITGNMYAGMPISEGTGKHAWTQCMELAVGPAGLDRLGLYIPNIFCTDIHGMGVDFNPRDMYAIAIFDAYNGFTPETKTTASPITNILALSGRYRVEGLGAPDPVTGLYSQCPTLVAGLGAGFDRLRSLVHRLNLPCDHAYAMILAAVDRGNVFETLPVIFSNVEYMRDLELLKRTVDATPADRNLYRETMGLIFADNYVIGKNGEHVFRANTKTVPPTIAALSPKVLGESLYNGAIYGDLEYGFSLKLAKYTGVTTSLRIDLNAV.

This is an uncharacterized protein from Ictaluridae (bullhead catfishes).